Reading from the N-terminus, the 698-residue chain is Elongation factor G 1 (698 aa).

Positions 8–290 constitute a tr-type G domain; it reads ERYRNIGIVA…AVVDFLPAPI (283 aa). GTP contacts are provided by residues 17 to 24, 88 to 92, and 142 to 145; these read AHVDAGKT, DTPGH, and NKMD.

Belongs to the TRAFAC class translation factor GTPase superfamily. Classic translation factor GTPase family. EF-G/EF-2 subfamily.

It localises to the cytoplasm. In terms of biological role, catalyzes the GTP-dependent ribosomal translocation step during translation elongation. During this step, the ribosome changes from the pre-translocational (PRE) to the post-translocational (POST) state as the newly formed A-site-bound peptidyl-tRNA and P-site-bound deacylated tRNA move to the P and E sites, respectively. Catalyzes the coordinated movement of the two tRNA molecules, the mRNA and conformational changes in the ribosome. The chain is Elongation factor G 1 from Shewanella frigidimarina (strain NCIMB 400).